The following is a 103-amino-acid chain: Pro-corazonin (103 aa).

Residues 1–19 (MSANVTLLLIFVTLASVTA) form the signal peptide. The residue at position 20 (Q20) is a Pyrrolidone carboxylic acid. N30 bears the Asparagine amide mark. Residues 34-103 (DQGHLRPELK…NLNAMMDAFY (70 aa)) constitute a propeptide that is removed on maturation.

Expressed in corpora cardiaca (CC), corpora allata (CA), antennal lobe (AL) and gnathal ganglion (GNG) (at protein level). Expression in CC and CA detected in all animals, expression in AL and in GNG in some animals.

The protein resides in the secreted. Its function is as follows. Cardioactive peptide. Corazonin is probably involved in the physiological regulation of the heart beat. In Agrotis ipsilon (Black cutworm moth), this protein is Pro-corazonin.